A 387-amino-acid chain; its full sequence is 3-ketoacyl-CoA thiolase (387 aa).

Cys-91 acts as the Acyl-thioester intermediate in catalysis. Catalysis depends on proton acceptor residues His-343 and Cys-373.

Belongs to the thiolase-like superfamily. Thiolase family. In terms of assembly, heterotetramer of two alpha chains (FadB) and two beta chains (FadA).

It localises to the cytoplasm. The catalysed reaction is an acyl-CoA + acetyl-CoA = a 3-oxoacyl-CoA + CoA. The protein operates within lipid metabolism; fatty acid beta-oxidation. Catalyzes the final step of fatty acid oxidation in which acetyl-CoA is released and the CoA ester of a fatty acid two carbons shorter is formed. In Erwinia tasmaniensis (strain DSM 17950 / CFBP 7177 / CIP 109463 / NCPPB 4357 / Et1/99), this protein is 3-ketoacyl-CoA thiolase.